A 143-amino-acid polypeptide reads, in one-letter code: Transcriptional regulator SlyA (143 aa).

The region spanning 2-135 (ESTLGSDLAR…LSGLIDKLEK (134 aa)) is the HTH marR-type domain. Residues 49-72 (QIQLAKAIGIEQPSLVRTLDQLEE) constitute a DNA-binding region (H-T-H motif).

Belongs to the SlyA family. As to quaternary structure, homodimer.

Its function is as follows. Transcription regulator that can specifically activate or repress expression of target genes. The polypeptide is Transcriptional regulator SlyA (Yersinia pestis (strain Pestoides F)).